Consider the following 606-residue polypeptide: DNA mismatch repair protein MutL (606 aa).

The interval 340–366 (MNAFRPGYSPSGLRPSPSATWSAATSP) is disordered. Positions 353 to 366 (RPSPSATWSAATSP) are enriched in low complexity.

It belongs to the DNA mismatch repair MutL/HexB family.

Its function is as follows. This protein is involved in the repair of mismatches in DNA. It is required for dam-dependent methyl-directed DNA mismatch repair. May act as a 'molecular matchmaker', a protein that promotes the formation of a stable complex between two or more DNA-binding proteins in an ATP-dependent manner without itself being part of a final effector complex. This Agrobacterium fabrum (strain C58 / ATCC 33970) (Agrobacterium tumefaciens (strain C58)) protein is DNA mismatch repair protein MutL.